The primary structure comprises 512 residues: D-alanine--D-alanyl carrier protein ligase (512 aa).

T152 to S153 contacts ATP. Position 199 (D199) interacts with D-alanine. N294–T299 contacts ATP. A D-alanine-binding site is contributed by V303. ATP is bound by residues D385, Y397 to R400, and K499. K499 is a D-alanine binding site.

Belongs to the ATP-dependent AMP-binding enzyme family. DltA subfamily.

It localises to the cytoplasm. The catalysed reaction is holo-[D-alanyl-carrier protein] + D-alanine + ATP = D-alanyl-[D-alanyl-carrier protein] + AMP + diphosphate. It functions in the pathway cell wall biogenesis; lipoteichoic acid biosynthesis. Functionally, catalyzes the first step in the D-alanylation of lipoteichoic acid (LTA), the activation of D-alanine and its transfer onto the D-alanyl carrier protein (Dcp) DltC. In an ATP-dependent two-step reaction, forms a high energy D-alanyl-AMP intermediate, followed by transfer of the D-alanyl residue as a thiol ester to the phosphopantheinyl prosthetic group of the Dcp. D-alanylation of LTA plays an important role in modulating the properties of the cell wall in Gram-positive bacteria, influencing the net charge of the cell wall. This is D-alanine--D-alanyl carrier protein ligase from Streptococcus equi subsp. equi (strain 4047).